Here is a 146-residue protein sequence, read N- to C-terminus: Large ribosomal subunit protein uL15 (146 aa).

A compositionally biased stretch (basic and acidic residues) spans Met1–Arg13. Residues Met1–Arg47 are disordered. Residues Arg21 to Ala31 show a composition bias toward gly residues.

This sequence belongs to the universal ribosomal protein uL15 family. As to quaternary structure, part of the 50S ribosomal subunit.

In terms of biological role, binds to the 23S rRNA. In Clostridium kluyveri (strain NBRC 12016), this protein is Large ribosomal subunit protein uL15.